A 502-amino-acid polypeptide reads, in one-letter code: Aspartyl/glutamyl-tRNA(Asn/Gln) amidotransferase subunit B (502 aa).

This sequence belongs to the GatB/GatE family. GatB subfamily. Heterotrimer of A, B and C subunits.

It carries out the reaction L-glutamyl-tRNA(Gln) + L-glutamine + ATP + H2O = L-glutaminyl-tRNA(Gln) + L-glutamate + ADP + phosphate + H(+). The enzyme catalyses L-aspartyl-tRNA(Asn) + L-glutamine + ATP + H2O = L-asparaginyl-tRNA(Asn) + L-glutamate + ADP + phosphate + 2 H(+). Its function is as follows. Allows the formation of correctly charged Asn-tRNA(Asn) or Gln-tRNA(Gln) through the transamidation of misacylated Asp-tRNA(Asn) or Glu-tRNA(Gln) in organisms which lack either or both of asparaginyl-tRNA or glutaminyl-tRNA synthetases. The reaction takes place in the presence of glutamine and ATP through an activated phospho-Asp-tRNA(Asn) or phospho-Glu-tRNA(Gln). The chain is Aspartyl/glutamyl-tRNA(Asn/Gln) amidotransferase subunit B from Brucella suis (strain ATCC 23445 / NCTC 10510).